The following is a 202-amino-acid chain: Glycerol-3-phosphate acyltransferase (202 aa).

The next 6 membrane-spanning stretches (helical) occupy residues 2 to 22 (MIVVMLILSYLIGAIPNGYVI), 54 to 74 (FIVTFLDIFKGFITVFFPIWF), 85 to 105 (FFTHGLIVGLFAILGHVYPIY), 120 to 140 (VVLGVNPILLLILAIIFFGVL), 141 to 161 (YIFKYVSLSSIIAAICCVIGS), and 162 to 182 (LIIQDYILFGMSLLVSIILIV).

Belongs to the PlsY family. In terms of assembly, probably interacts with PlsX.

The protein resides in the cell membrane. The enzyme catalyses an acyl phosphate + sn-glycerol 3-phosphate = a 1-acyl-sn-glycero-3-phosphate + phosphate. The protein operates within lipid metabolism; phospholipid metabolism. Functionally, catalyzes the transfer of an acyl group from acyl-phosphate (acyl-PO(4)) to glycerol-3-phosphate (G3P) to form lysophosphatidic acid (LPA). This enzyme utilizes acyl-phosphate as fatty acyl donor, but not acyl-CoA or acyl-ACP. The sequence is that of Glycerol-3-phosphate acyltransferase from Staphylococcus haemolyticus (strain JCSC1435).